Consider the following 455-residue polypeptide: tRNA modification GTPase MnmE (455 aa).

Position 22 (Arg-22) interacts with (6S)-5-formyl-5,6,7,8-tetrahydrofolate. The disordered stretch occupies residues 43 to 67; that stretch reads RRATRAALRSPPSGPGPTGPGPEEG. Residues Glu-92 and Arg-132 each contribute to the (6S)-5-formyl-5,6,7,8-tetrahydrofolate site. Residues 228 to 381 enclose the TrmE-type G domain; it reads GLQVAVVGAP…LEAALESRAR (154 aa). Asn-238 is a binding site for K(+). Residues 238–243, 257–263, and 282–285 each bind GTP; these read NVGKSS, SDIAGTT, and DTAG. Ser-242 is a binding site for Mg(2+). K(+) contacts are provided by Ser-257, Ile-259, and Thr-262. Thr-263 is a binding site for Mg(2+). Lys-455 is a binding site for (6S)-5-formyl-5,6,7,8-tetrahydrofolate.

This sequence belongs to the TRAFAC class TrmE-Era-EngA-EngB-Septin-like GTPase superfamily. TrmE GTPase family. In terms of assembly, homodimer. Heterotetramer of two MnmE and two MnmG subunits. It depends on K(+) as a cofactor.

It localises to the cytoplasm. Exhibits a very high intrinsic GTPase hydrolysis rate. Involved in the addition of a carboxymethylaminomethyl (cmnm) group at the wobble position (U34) of certain tRNAs, forming tRNA-cmnm(5)s(2)U34. This is tRNA modification GTPase MnmE from Rhodospirillum rubrum (strain ATCC 11170 / ATH 1.1.1 / DSM 467 / LMG 4362 / NCIMB 8255 / S1).